Consider the following 549-residue polypeptide: Probable serine/threonine-protein kinase WNK5 (549 aa).

The Protein kinase domain maps to 25-283; the sequence is GRFREVLGKG…AKELLADPFL (259 aa). ATP is bound by residues 105–108 and Lys-155; that span reads TELF. The active-site Proton acceptor is the Asp-172. Residues 414-490 form a disordered region; that stretch reads ESFGHEDDED…SPAIDDDQNQ (77 aa). Residues 452–463 show a composition bias toward acidic residues; that stretch reads DDSSNDVIPDMD. Over residues 467–476 the composition is skewed to low complexity; sequence RSSNRLLNSS. Ser-504 is subject to Phosphoserine. The segment at 525 to 549 is disordered; it reads RGRGFDPNTNELQPQPSSTDFIRRC. Polar residues predominate over residues 531–549; sequence PNTNELQPQPSSTDFIRRC.

It belongs to the protein kinase superfamily. Ser/Thr protein kinase family. WNK subfamily. As to quaternary structure, interacts with AHK4.

The catalysed reaction is L-seryl-[protein] + ATP = O-phospho-L-seryl-[protein] + ADP + H(+). It catalyses the reaction L-threonyl-[protein] + ATP = O-phospho-L-threonyl-[protein] + ADP + H(+). Functionally, regulates flowering time by modulating the photoperiod pathway. This Arabidopsis thaliana (Mouse-ear cress) protein is Probable serine/threonine-protein kinase WNK5 (WNK5).